The following is a 249-amino-acid chain: Large ribosomal subunit protein uL10m (249 aa).

Residues 1–31 constitute a mitochondrion transit peptide; the sequence is MLQLRFMPGWVPRNGFFGLKETIGTVHKRFY. The segment at 226-249 is disordered; sequence SHNDNQKPKEDVESTTDAESKGSK.

The protein belongs to the universal ribosomal protein uL10 family. As to quaternary structure, component of the mitochondrial large ribosomal subunit (mt-LSU). Mature yeast 74S mitochondrial ribosomes consist of a small (37S) and a large (54S) subunit. The 37S small subunit contains a 15S ribosomal RNA (15S mt-rRNA) and 34 different proteins. The 54S large subunit contains a 21S rRNA (21S mt-rRNA) and 46 different proteins.

The protein localises to the mitochondrion. Functionally, component of the mitochondrial ribosome (mitoribosome), a dedicated translation machinery responsible for the synthesis of mitochondrial genome-encoded proteins, including at least some of the essential transmembrane subunits of the mitochondrial respiratory chain. The mitoribosomes are attached to the mitochondrial inner membrane and translation products are cotranslationally integrated into the membrane. The chain is Large ribosomal subunit protein uL10m (MRPL11) from Saccharomyces cerevisiae (strain ATCC 204508 / S288c) (Baker's yeast).